Reading from the N-terminus, the 283-residue chain is Extensin (283 aa).

Residues 1-24 (MMGGKAALLLALVAVTLAVVEIQA) form the signal peptide. The disordered stretch occupies residues 27 to 283 (GYGYGGGYPT…PPPPPPPPYY (257 aa)). Residues 36–45 (TPTPKPPAKG) show a composition bias toward pro residues. Residues 46–69 (PKPEKPPTKGHGHKPEKPPKEHKP) are compositionally biased toward basic and acidic residues. Composition is skewed to pro residues over residues 70-264 (TPPT…PTYT) and 272-283 (SSPPPPPPPPYY).

In terms of processing, hydroxylated on proline residues in the S-P-P-P-P repeat. Post-translationally, O-glycosylated on hydroxyprolines.

The protein localises to the secreted. It is found in the primary cell wall. Functionally, structural component in primary cell wall. The protein is Extensin (HRGP) of Sorghum bicolor (Sorghum).